Reading from the N-terminus, the 244-residue chain is Probable transcriptional regulatory protein CHY_1525 (244 aa).

The protein belongs to the TACO1 family.

Its subcellular location is the cytoplasm. This Carboxydothermus hydrogenoformans (strain ATCC BAA-161 / DSM 6008 / Z-2901) protein is Probable transcriptional regulatory protein CHY_1525.